The primary structure comprises 154 residues: Putative thioredoxin H10 (154 aa).

Residues 24 to 148 (NNNNSYGQTR…LQKKTAAAAD (125 aa)) enclose the Thioredoxin domain. Catalysis depends on nucleophile residues C74 and C77. A disulfide bridge links C74 with C77.

It belongs to the thioredoxin family.

It is found in the cytoplasm. In terms of biological role, probable thiol-disulfide oxidoreductase that may be involved in the redox regulation of a number of cytosolic enzymes. The chain is Putative thioredoxin H10 from Arabidopsis thaliana (Mouse-ear cress).